The sequence spans 170 residues: Large ribosomal subunit protein uL5 (170 aa).

The protein belongs to the universal ribosomal protein uL5 family. Part of the 50S ribosomal subunit; contacts the 5S rRNA and probably tRNA. Forms a bridge to the 30S subunit in the 70S ribosome.

This is one of the proteins that bind and probably mediate the attachment of the 5S RNA into the large ribosomal subunit, where it forms part of the central protuberance. In the 70S ribosome it contacts protein S13 of the 30S subunit (bridge B1b), connecting the 2 subunits; this bridge is implicated in subunit movement. May contact the P site tRNA; the 5S rRNA and some of its associated proteins might help stabilize positioning of ribosome-bound tRNAs. The polypeptide is Large ribosomal subunit protein uL5 (Thermoplasma acidophilum (strain ATCC 25905 / DSM 1728 / JCM 9062 / NBRC 15155 / AMRC-C165)).